We begin with the raw amino-acid sequence, 431 residues long: Divergent protein kinase domain 1B (431 aa).

At 1-30 (MRRLRRLVHLVLLCPFSKGLQGRLPGLRVK) the chain is on the cytoplasmic side. Positions 5-6 (RR) match the May mediate ER retention motif. A helical transmembrane segment spans residues 31–51 (YVLLVWLGIFVGSWMVYVHYS). Over 52–431 (SYSELCRGHV…WREISNTNYS (380 aa)) the chain is Lumenal. Intrachain disulfides connect C57–C94 and C62–C117.

It belongs to the DIPK family. Among the many cysteines in the lumenal domain, most are probably involved in disulfide bonds. In terms of tissue distribution, expressed in kidney, testis, lung, heart, stomach, intestine, pancreas, liver and salivary gland. Strongly expressed in acute pancreatitis, brain, and in peripheral endothelial cells.

The protein resides in the endoplasmic reticulum membrane. In Mus musculus (Mouse), this protein is Divergent protein kinase domain 1B (Dipk1b).